A 283-amino-acid chain; its full sequence is Tyrosine recombinase THA_404 (283 aa).

In terms of domain architecture, Core-binding (CB) spans 1-86 (MDKVIEMFSD…SLNSFFNYLE (86 aa)). Residues 107–281 (KIPDFLTEDE…ADQEKFDAVK (175 aa)) form the Tyr recombinase domain. Residues arginine 145, lysine 170, histidine 233, arginine 236, and histidine 259 contribute to the active site. Tyrosine 268 serves as the catalytic O-(3'-phospho-DNA)-tyrosine intermediate.

This sequence belongs to the 'phage' integrase family.

Its subcellular location is the cytoplasm. Functionally, site-specific tyrosine recombinase, which acts by catalyzing the cutting and rejoining of the recombining DNA molecules. This chain is Tyrosine recombinase THA_404, found in Thermosipho africanus (strain TCF52B).